Here is a 501-residue protein sequence, read N- to C-terminus: MAAPRAATPGPGGGARKPELDLELGSSTQTSHRLLAYSDALLSIIATVMILPVAHTKIHPDQKLGESVQQLLLTKIAVYLMTFLIVTVAWAAHVRLFQVIELIDDVLALLNLACMMIITFLPYTFSLMASFPGVPFGIFLFSVCAVVIGLIQAVIVVYGFYHPHLLNQQIQVSENQNFYKRHILKIILRGPALCFLAAIFSFFFIPLSYLLLGLVIVFPHLSRFITWCKTKIVGHRDEEEASYSLETFSFYLSEPLSKERVEAFSDGVYAIVATLLILDICEDNVPDPREVGEKFHGSLLEALSEYGPNYLAYFGSFVTIGLLWFVHHSLFLYVTKATRLMGLLNILSLAFIGGLPLAYQLTSEFAEKSHNEIEAIQVSCVITFFASIFQFAIWTTALLHERETLHPFARYGGKEHAFMFAKLALYPCVSLGAFFLTCLLSEFSTEIFHLMQIVIPFAFLALRIFVRISLTVIKSVMSLSRRKVVLLEEEEACLSPTETHS.

A disordered region spans residues 1 to 20; that stretch reads MAAPRAATPGPGGGARKPEL. The Cytoplasmic segment spans residues 1–31; it reads MAAPRAATPGPGGGARKPELDLELGSSTQTS. Residues 32-54 traverse the membrane as a helical segment; it reads HRLLAYSDALLSIIATVMILPVA. A RxxxFSD motif 1 motif is present at residues 33–39; sequence RLLAYSD. The Lumenal segment spans residues 55–75; the sequence is HTKIHPDQKLGESVQQLLLTK. Positions 56–61 are short helix H1-1; it reads TKIHPD. Positions 63 to 69 are short helix H2-1; the sequence is KLGESVQ. The helical transmembrane segment at 76-98 threads the bilayer; the sequence is IAVYLMTFLIVTVAWAAHVRLFQ. Residues 99-104 lie on the Cytoplasmic side of the membrane; that stretch reads VIELID. A helical transmembrane segment spans residues 105–126; it reads DVLALLNLACMMIITFLPYTFS. The Lumenal portion of the chain corresponds to 127 to 136; the sequence is LMASFPGVPF. The chain crosses the membrane as a helical span at residues 137 to 158; it reads GIFLFSVCAVVIGLIQAVIVVY. At 159–182 the chain is on the cytoplasmic side; it reads GFYHPHLLNQQIQVSENQNFYKRH. A helical transmembrane segment spans residues 183 to 203; it reads ILKIILRGPALCFLAAIFSFF. Topologically, residues 204 to 208 are lumenal; it reads FIPLS. The helical transmembrane segment at 209-228 threads the bilayer; the sequence is YLLLGLVIVFPHLSRFITWC. Topologically, residues 229 to 257 are cytoplasmic; that stretch reads KTKIVGHRDEEEASYSLETFSFYLSEPLS. Residues 258–282 form a helical membrane-spanning segment; the sequence is KERVEAFSDGVYAIVATLLILDICE. A RxxxFSD motif 2 motif is present at residues 260 to 266; that stretch reads RVEAFSD. Residues 283–309 lie on the Lumenal side of the membrane; it reads DNVPDPREVGEKFHGSLLEALSEYGPN. The segment at 288–296 is short helix H1-2; sequence PREVGEKFH. A short helix H2-2 region spans residues 298 to 304; sequence SLLEALS. The chain crosses the membrane as a helical span at residues 310 to 332; that stretch reads YLAYFGSFVTIGLLWFVHHSLFL. At 333 to 338 the chain is on the cytoplasmic side; sequence YVTKAT. Residues 339–360 form a helical membrane-spanning segment; sequence RLMGLLNILSLAFIGGLPLAYQ. Residues 361–375 are Lumenal-facing; that stretch reads LTSEFAEKSHNEIEA. A helical transmembrane segment spans residues 376-396; the sequence is IQVSCVITFFASIFQFAIWTT. Topologically, residues 397-416 are cytoplasmic; the sequence is ALLHERETLHPFARYGGKEH. Residues 417–440 form a helical membrane-spanning segment; that stretch reads AFMFAKLALYPCVSLGAFFLTCLL. The Lumenal segment spans residues 441–442; it reads SE. Residues 443–469 form a helical membrane-spanning segment; the sequence is FSTEIFHLMQIVIPFAFLALRIFVRIS. Over 470–501 the chain is Cytoplasmic; sequence LTVIKSVMSLSRRKVVLLEEEEACLSPTETHS.

It belongs to the TMEM175 family. As to quaternary structure, homodimer.

It is found in the endosome membrane. Its subcellular location is the lysosome membrane. It catalyses the reaction H(+)(in) = H(+)(out). The catalysed reaction is K(+)(in) = K(+)(out). Its activity is regulated as follows. Active at low pH (under pH 4.6): proton channel activity is activated by luminal side protons. Polyunsaturated fatty acids, such as arachidonic acid, also activate the channel activity. Proton-activated proton channel that catalyzes proton efflux from endosomes and lysosomes to maintain a steady-state pH. Activated at low pH (under pH 4.6) by luminal side protons: selectively mediates lysosomal proton release from lysosomes, eliciting a proton leak that balances V-ATPase activity to maintain pH homeostasis. Regulation of lumenal pH stability is required for autophagosome-lysosome fusion. Also acts as a potassium channel at higher pH, regulating potassium conductance in endosomes and lysosomes. In Gallus gallus (Chicken), this protein is Endosomal/lysosomal proton channel TMEM175.